We begin with the raw amino-acid sequence, 287 residues long: Leucine-rich repeat-containing protein 72 (287 aa).

LRR repeat units lie at residues 46–67, 68–89, 90–111, and 112–133; these read DVFELFLSKKELTEVIDLSRFK, KLKYLWLHHNKLHGITFLTRNY, CLTELYLNNNAIFEIEGLHYLP, and SLHILLLHHNELTNIDATVKEL. Positions 147–185 constitute an LRRCT domain; that stretch reads NPLCQYNLYRLYIIYHLPGVELLDRNQVTEKERRSMITI.

The protein is Leucine-rich repeat-containing protein 72 (LRRC72) of Homo sapiens (Human).